Here is a 528-residue protein sequence, read N- to C-terminus: U3 small nucleolar RNA-associated protein 15 homolog (528 aa).

The residue at position 2 (A2) is an N-acetylalanine. 7 WD repeats span residues 36-75, 78-117, 120-159, 162-202, 204-242, 246-285, and 287-326; these read KEFG…PVKT, RFKD…PLRQ, GHTK…EILT, EHSD…NVLC, EHGQ…QLLV, NHHK…VVHS, and DYAA…KKES. A Glycyl lysine isopeptide (Lys-Gly) (interchain with G-Cter in SUMO2) cross-link involves residue K249. The interval 508–528 is disordered; sequence AELPEEKTESPRQPSDTDKNS. Positions 511 to 528 are enriched in basic and acidic residues; it reads PEEKTESPRQPSDTDKNS.

As to quaternary structure, part of the small subunit (SSU) processome, composed of more than 70 proteins and the RNA chaperone small nucleolar RNA (snoRNA) U3. May be a component of the proposed t-UTP subcomplex of the ribosomal small subunit (SSU) processome containing at least UTP4, WDR43, HEATR1, UTP15, WDR75. Interacts directly with UTP4 and WDR43.

It is found in the nucleus. The protein localises to the nucleolus. Its function is as follows. Ribosome biogenesis factor. Involved in nucleolar processing of pre-18S ribosomal RNA. Required for optimal pre-ribosomal RNA transcription by RNA polymerase I. Part of the small subunit (SSU) processome, first precursor of the small eukaryotic ribosomal subunit. During the assembly of the SSU processome in the nucleolus, many ribosome biogenesis factors, an RNA chaperone and ribosomal proteins associate with the nascent pre-rRNA and work in concert to generate RNA folding, modifications, rearrangements and cleavage as well as targeted degradation of pre-ribosomal RNA by the RNA exosome. This Rattus norvegicus (Rat) protein is U3 small nucleolar RNA-associated protein 15 homolog.